A 1019-amino-acid chain; its full sequence is Outer capsid protein P3 (1019 aa).

It belongs to the phytoreovirus inner capsid protein P3 family. As to quaternary structure, homodimer. Homomultimer.

It localises to the virion. The protein localises to the host cytoplasm. Functionally, capsid protein which self-assembles to form the inner icosahedral capsid with a T=2 symmetry, and consisting of 60 P3 dimers. This is Outer capsid protein P3 from Alopecurus aequalis (Barnyard grass).